A 239-amino-acid polypeptide reads, in one-letter code: Leucine-rich repeat-containing protein 57 (239 aa).

A lipid anchor (N-myristoyl glycine) is attached at G2. LRR repeat units lie at residues 39–60 (NLRT…IIGK), 63–85 (LLKS…CNLK), 86–107 (KLET…FGQL), 109–130 (ALKT…LCCL), 132–153 (HLDV…VGEL), 154–175 (QAIE…ISCC), 177–197 (RLKV…PQSI), and 202–222 (QICL…RELE).

It is found in the membrane. The chain is Leucine-rich repeat-containing protein 57 (Lrrc57) from Mus musculus (Mouse).